The chain runs to 359 residues: Beta-hexosaminidase (359 aa).

Residues D64, R72, R138, and 168 to 169 (KH) each bind substrate. The active-site Proton donor/acceptor is the H181. The Nucleophile role is filled by D252.

It belongs to the glycosyl hydrolase 3 family. NagZ subfamily.

The protein localises to the cytoplasm. The catalysed reaction is Hydrolysis of terminal non-reducing N-acetyl-D-hexosamine residues in N-acetyl-beta-D-hexosaminides.. It participates in cell wall biogenesis; peptidoglycan recycling. Plays a role in peptidoglycan recycling by cleaving the terminal beta-1,4-linked N-acetylglucosamine (GlcNAc) from peptide-linked peptidoglycan fragments, giving rise to free GlcNAc, anhydro-N-acetylmuramic acid and anhydro-N-acetylmuramic acid-linked peptides. This chain is Beta-hexosaminidase, found in Thiobacillus denitrificans (strain ATCC 25259 / T1).